The sequence spans 508 residues: Photosystem II CP47 reaction center protein (508 aa).

6 helical membrane-spanning segments follow: residues 21–36 (SVHIMHTALVAGWAGS), 101–115 (IVFSGLCFLAAIWHW), 140–156 (GIHLFLAGVACFGFGAF), 203–218 (IAAGTLGILAGLFHLS), 237–252 (VLSSSIAAVFFAAFVV), and 457–472 (SFALLFFFGHIWHGAR).

This sequence belongs to the PsbB/PsbC family. PsbB subfamily. As to quaternary structure, PSII is composed of 1 copy each of membrane proteins PsbA, PsbB, PsbC, PsbD, PsbE, PsbF, PsbH, PsbI, PsbJ, PsbK, PsbL, PsbM, PsbT, PsbX, PsbY, PsbZ, Psb30/Ycf12, at least 3 peripheral proteins of the oxygen-evolving complex and a large number of cofactors. It forms dimeric complexes. The cofactor is Binds multiple chlorophylls. PSII binds additional chlorophylls, carotenoids and specific lipids..

The protein localises to the plastid. The protein resides in the chloroplast thylakoid membrane. One of the components of the core complex of photosystem II (PSII). It binds chlorophyll and helps catalyze the primary light-induced photochemical processes of PSII. PSII is a light-driven water:plastoquinone oxidoreductase, using light energy to abstract electrons from H(2)O, generating O(2) and a proton gradient subsequently used for ATP formation. This is Photosystem II CP47 reaction center protein from Phaseolus vulgaris (Kidney bean).